A 937-amino-acid polypeptide reads, in one-letter code: Beta-mannosidase A (937 aa).

The first 23 residues, 1-23, serve as a signal peptide directing secretion; sequence MRALPTTATTLLGVLFFPSASRS. 7 N-linked (GlcNAc...) asparagine glycosylation sites follow: Asn-42, Asn-82, Asn-250, Asn-285, Asn-319, Asn-329, and Asn-350. The Proton donor role is filled by Glu-482. N-linked (GlcNAc...) asparagine glycans are attached at residues Asn-553, Asn-612, Asn-743, and Asn-796.

This sequence belongs to the glycosyl hydrolase 2 family. Beta-mannosidase A subfamily. Homodimer. Post-translationally, N-glycosylated.

The protein localises to the secreted. It carries out the reaction Hydrolysis of terminal, non-reducing beta-D-mannose residues in beta-D-mannosides.. It participates in glycan metabolism; N-glycan degradation. Functionally, exoglycosidase that cleaves the single beta-linked mannose residue from the non-reducing end of beta-mannosidic oligosaccharides of various complexity and length. Involved in the degradation of polymeric mannan and galactomannan. Releases the terminal mannose residue from mannotriose and is somewaht less active on other mannooligosaccharides. This chain is Beta-mannosidase A (mndA), found in Aspergillus aculeatus.